The sequence spans 614 residues: 1-deoxy-D-xylulose-5-phosphate synthase (614 aa).

Thiamine diphosphate contacts are provided by residues H76 and 117–119 (GHS). Mg(2+) is bound at residue D148. Residues 149–150 (GA), N177, Y285, and E366 each bind thiamine diphosphate. Mg(2+) is bound at residue N177.

This sequence belongs to the transketolase family. DXPS subfamily. In terms of assembly, homodimer. Mg(2+) is required as a cofactor. It depends on thiamine diphosphate as a cofactor.

The catalysed reaction is D-glyceraldehyde 3-phosphate + pyruvate + H(+) = 1-deoxy-D-xylulose 5-phosphate + CO2. The protein operates within metabolic intermediate biosynthesis; 1-deoxy-D-xylulose 5-phosphate biosynthesis; 1-deoxy-D-xylulose 5-phosphate from D-glyceraldehyde 3-phosphate and pyruvate: step 1/1. Catalyzes the acyloin condensation reaction between C atoms 2 and 3 of pyruvate and glyceraldehyde 3-phosphate to yield 1-deoxy-D-xylulose-5-phosphate (DXP). The protein is 1-deoxy-D-xylulose-5-phosphate synthase of Pasteurella multocida (strain Pm70).